Reading from the N-terminus, the 314-residue chain is Mitochondrial translation factor 2 (314 aa).

The tract at residues 111–136 (ENSSNIYDPSSPPDSPRKQQTHLGTI) is disordered.

Component of the MRH5C complex, composed of mrh5, ppr4, mtf2, and sls1. Proteins mtf2 and sls1 form a subcomplex that serves as a scaffold to bring mrh5 and ppr4 together. The MRH5C complex associates with the small subunit of the mitochondrial ribosome.

Its function is as follows. Translation activation factor that as part of the MRH5C complex specifically recruits cox1 mRNA to the mitochondrial ribosome for translation initiation. This chain is Mitochondrial translation factor 2, found in Schizosaccharomyces pombe (strain 972 / ATCC 24843) (Fission yeast).